The sequence spans 472 residues: Tyrosine--tRNA ligase, mitochondrial (472 aa).

Y72 is a binding site for L-tyrosine. D76 contacts ATP. The 'HIGH' region motif lies at 77–86 (PTGDSLHVGH). L-tyrosine is bound by residues D116, Y216, Q220, D223, and Q242. ATP is bound by residues I269 and K279. Positions 276–280 (KLGKS) match the 'KMSKS' region motif. K350 and K362 each carry N6-acetyllysine.

The protein belongs to the class-I aminoacyl-tRNA synthetase family. Homodimer.

It is found in the mitochondrion matrix. The enzyme catalyses tRNA(Tyr) + L-tyrosine + ATP = L-tyrosyl-tRNA(Tyr) + AMP + diphosphate + H(+). In terms of biological role, catalyzes the attachment of tyrosine to tRNA(Tyr) in a two-step reaction: tyrosine is first activated by ATP to form Tyr-AMP and then transferred to the acceptor end of tRNA(Tyr). The protein is Tyrosine--tRNA ligase, mitochondrial (Yars2) of Mus musculus (Mouse).